Reading from the N-terminus, the 596-residue chain is Putative terpene synthase 3, chloroplastic (596 aa).

Residues 1–46 constitute a chloroplast transit peptide; sequence MATLSMQVSTLSKQVKNLNTFGMGSASKLPMVARRVSTIRLRPICS. Mn(2+) is bound by residues D349 and D353. A DDXXD motif motif is present at residues 349-353; it reads DDVYD. 2 homodimerization regions span residues 355–361 and 427–464; these read YGTLDEL and EAKW…FTLP. Positions 493 and 501 each coordinate Mn(2+).

The protein belongs to the terpene synthase family. Homodimer. The cofactor is Mn(2+). Mg(2+) serves as cofactor.

The protein resides in the plastid. The protein localises to the chloroplast. It functions in the pathway secondary metabolite biosynthesis; terpenoid biosynthesis. Its function is as follows. Putative monoterpene synthase. This is Putative terpene synthase 3, chloroplastic from Thymus vulgaris (Thyme).